Here is a 172-residue protein sequence, read N- to C-terminus: Immune protein Tsi1 (172 aa).

The N-terminal stretch at 1–19 (MKLLAGSFAALFLSLSAQA) is a signal peptide. 3 disulfides stabilise this stretch: C22-C167, C79-C121, and C147-C155.

Forms a heterotetramer with Tse1 consisting of two Tse1 dimers and two Tsi1 dimers. Formation of the complex inactivates Tse1 enzymatic activity.

Functionally, immunity protein that plays a role in preventing early activation of toxin Tse1. Binds to a large surface of Tse1 and thereby occludes the active site to specifically inhibits enzyme activity by forming a hydrogen bond with the catalytic diad. The polypeptide is Immune protein Tsi1 (Pseudomonas aeruginosa (strain ATCC 15692 / DSM 22644 / CIP 104116 / JCM 14847 / LMG 12228 / 1C / PRS 101 / PAO1)).